Consider the following 467-residue polypeptide: UDP-N-acetylmuramate--L-alanine ligase (467 aa).

ATP is bound at residue 114–120; the sequence is GTHGKTT.

It belongs to the MurCDEF family.

Its subcellular location is the cytoplasm. The catalysed reaction is UDP-N-acetyl-alpha-D-muramate + L-alanine + ATP = UDP-N-acetyl-alpha-D-muramoyl-L-alanine + ADP + phosphate + H(+). The protein operates within cell wall biogenesis; peptidoglycan biosynthesis. Its function is as follows. Cell wall formation. The protein is UDP-N-acetylmuramate--L-alanine ligase of Rhodopseudomonas palustris (strain TIE-1).